Consider the following 352-residue polypeptide: DNA-directed RNA polymerase subunit alpha (352 aa).

Positions 1–236 (MTVNIRNWQE…DQLQVFVHFE (236 aa)) are alpha N-terminal domain (alpha-NTD). Residues 257-352 (SDVNQLNRFL…AKKLEQELLG (96 aa)) form an alpha C-terminal domain (alpha-CTD) region.

This sequence belongs to the RNA polymerase alpha chain family. In terms of assembly, homodimer. The RNAP catalytic core consists of 2 alpha, 1 beta, 1 beta' and 1 omega subunit. When a sigma factor is associated with the core the holoenzyme is formed, which can initiate transcription.

It catalyses the reaction RNA(n) + a ribonucleoside 5'-triphosphate = RNA(n+1) + diphosphate. In terms of biological role, DNA-dependent RNA polymerase catalyzes the transcription of DNA into RNA using the four ribonucleoside triphosphates as substrates. This Sphingopyxis alaskensis (strain DSM 13593 / LMG 18877 / RB2256) (Sphingomonas alaskensis) protein is DNA-directed RNA polymerase subunit alpha.